We begin with the raw amino-acid sequence, 142 residues long: Large ribosomal subunit protein uL11 (142 aa).

Belongs to the universal ribosomal protein uL11 family. In terms of assembly, part of the ribosomal stalk of the 50S ribosomal subunit. Interacts with L10 and the large rRNA to form the base of the stalk. L10 forms an elongated spine to which L12 dimers bind in a sequential fashion forming a multimeric L10(L12)X complex. Post-translationally, one or more lysine residues are methylated.

Forms part of the ribosomal stalk which helps the ribosome interact with GTP-bound translation factors. This is Large ribosomal subunit protein uL11 from Aeromonas hydrophila subsp. hydrophila (strain ATCC 7966 / DSM 30187 / BCRC 13018 / CCUG 14551 / JCM 1027 / KCTC 2358 / NCIMB 9240 / NCTC 8049).